The following is a 681-amino-acid chain: MLSKEEPACRQFHSREKTWGNEHNGKTVTQANNKEHKVPAVRRGDIGQREPAAHPASHIQGTMASENTGEQATCKDQYMDLDAPGNNLEHSWLHRHCEIPTTLHQRAKKTGRLFSGLFGLNLMFLGGTVVSSVALSNKAVPERDSQSFLCILMLLSSVWALYHLLFIRNQNGAVHHDHHAGAMWLKASLAIFGVCSIILSIFEIGHALLLQNCEILMDIVFFSIEIVFVSVQTVLLWVSCKDCVQMHHSVTRYGIMLTLATDILLWLTAVIDDSLEQDLEILQSNSTQDESNEMAQCQCPTDSMCWGLKQGYVTMFPFNIEYSLICATLLFIMWKNVGRREKLHSDPPRHTFQLRGIIYGPLIGGAALLVGISVFVQYQVEATSGMVSILSYHMYYGYKMIILAPMIVCSVAGIIAHSLREKEKKGQKETGRSDQDWLHMEDVGSENKNTDYSSGQYQSSQGDEKIQGYSLAQFALDNEKEKLEHRQGNTTKKHNTHQGKMKNYTRKLDVTLLFVSAVGQLGISYFSIIATVVTTPWTMLSALNFSNSLLLILQYLSQTMFIIESMRSIHEEEKEKPGHHEESHRRMSVQEMHKAPPSCLDAGHLGLSRRVVKEMAMFLMICNIMCWILGAFGAHPLYMNGLERQLYGSGIWLAILNIGLPLSVFYRMHSVGILLEVYLHA.

Over residues 1–25 the composition is skewed to basic and acidic residues; that stretch reads MLSKEEPACRQFHSREKTWGNEHNG. The interval 1-26 is disordered; the sequence is MLSKEEPACRQFHSREKTWGNEHNGK. The Cytoplasmic segment spans residues 1–112; that stretch reads MLSKEEPACR…LHQRAKKTGR (112 aa). The helical transmembrane segment at 113–133 threads the bilayer; it reads LFSGLFGLNLMFLGGTVVSSV. The Extracellular portion of the chain corresponds to 134 to 143; it reads ALSNKAVPER. A helical membrane pass occupies residues 144–166; sequence DSQSFLCILMLLSSVWALYHLLF. The Cytoplasmic portion of the chain corresponds to 167 to 182; that stretch reads IRNQNGAVHHDHHAGA. A helical membrane pass occupies residues 183 to 204; sequence MWLKASLAIFGVCSIILSIFEI. Residues 205-216 are Extracellular-facing; it reads GHALLLQNCEIL. A helical membrane pass occupies residues 217 to 240; the sequence is MDIVFFSIEIVFVSVQTVLLWVSC. The Cytoplasmic portion of the chain corresponds to 241 to 248; it reads KDCVQMHH. A helical transmembrane segment spans residues 249-271; it reads SVTRYGIMLTLATDILLWLTAVI. Residues 272–317 are Extracellular-facing; sequence DDSLEQDLEILQSNSTQDESNEMAQCQCPTDSMCWGLKQGYVTMFP. Residues 318–334 form a helical membrane-spanning segment; sequence FNIEYSLICATLLFIMW. Over 335–358 the chain is Cytoplasmic; it reads KNVGRREKLHSDPPRHTFQLRGII. A helical transmembrane segment spans residues 359–378; it reads YGPLIGGAALLVGISVFVQY. At 379 to 392 the chain is on the extracellular side; sequence QVEATSGMVSILSY. Residues 393–415 traverse the membrane as a helical segment; the sequence is HMYYGYKMIILAPMIVCSVAGII. Over 416-507 the chain is Cytoplasmic; it reads AHSLREKEKK…QGKMKNYTRK (92 aa). A helical transmembrane segment spans residues 508–529; that stretch reads LDVTLLFVSAVGQLGISYFSII. The Extracellular segment spans residues 530–540; the sequence is ATVVTTPWTML. A helical transmembrane segment spans residues 541–563; it reads SALNFSNSLLLILQYLSQTMFII. Residues 564-614 lie on the Cytoplasmic side of the membrane; the sequence is ESMRSIHEEEKEKPGHHEESHRRMSVQEMHKAPPSCLDAGHLGLSRRVVKE. Residues 615 to 632 traverse the membrane as a helical segment; it reads MAMFLMICNIMCWILGAF. The Extracellular portion of the chain corresponds to 633 to 651; that stretch reads GAHPLYMNGLERQLYGSGI. Residues 652 to 674 traverse the membrane as a helical segment; the sequence is WLAILNIGLPLSVFYRMHSVGIL. Topologically, residues 675 to 681 are cytoplasmic; that stretch reads LEVYLHA.

This sequence belongs to the otopetrin family. In terms of assembly, homodimer.

The protein localises to the cell membrane. The enzyme catalyses H(+)(in) = H(+)(out). PH regulates the proton channel activity from both sides of the plasma membrane. Low pH activates the channel from the extracellular side but inactivates the channel on the intracellular side. Zn(2+) and Ca(2+) can partially block the channel. In terms of biological role, proton-selective channel gated by extracellular protons. This is Proton channel OTOP3 (otop3) from Xenopus tropicalis (Western clawed frog).